The chain runs to 426 residues: uncharacterized protein (426 aa).

The tract at residues 23–42 is disordered; that stretch reads ENPRPTNNPSTSHPSDSYST. Polar residues predominate over residues 26–42; that stretch reads RPTNNPSTSHPSDSYST.

This sequence belongs to the serpin family.

This is an uncharacterized protein from Thermococcus kodakarensis (strain ATCC BAA-918 / JCM 12380 / KOD1) (Pyrococcus kodakaraensis (strain KOD1)).